Reading from the N-terminus, the 348-residue chain is Probable dual-specificity RNA methyltransferase RlmN (348 aa).

The active-site Proton acceptor is glutamate 89. Positions 95 to 328 (HKNRNTVCVS…VTLRISYGSK (234 aa)) constitute a Radical SAM core domain. A disulfide bridge links cysteine 102 with cysteine 333. [4Fe-4S] cluster-binding residues include cysteine 109, cysteine 113, and cysteine 116. Residues 159 to 160 (GE), serine 191, 214 to 216 (SLH), and asparagine 290 contribute to the S-adenosyl-L-methionine site. The S-methylcysteine intermediate role is filled by cysteine 333.

It belongs to the radical SAM superfamily. RlmN family. It depends on [4Fe-4S] cluster as a cofactor.

It localises to the cytoplasm. It carries out the reaction adenosine(2503) in 23S rRNA + 2 reduced [2Fe-2S]-[ferredoxin] + 2 S-adenosyl-L-methionine = 2-methyladenosine(2503) in 23S rRNA + 5'-deoxyadenosine + L-methionine + 2 oxidized [2Fe-2S]-[ferredoxin] + S-adenosyl-L-homocysteine. It catalyses the reaction adenosine(37) in tRNA + 2 reduced [2Fe-2S]-[ferredoxin] + 2 S-adenosyl-L-methionine = 2-methyladenosine(37) in tRNA + 5'-deoxyadenosine + L-methionine + 2 oxidized [2Fe-2S]-[ferredoxin] + S-adenosyl-L-homocysteine. Its function is as follows. Specifically methylates position 2 of adenine 2503 in 23S rRNA and position 2 of adenine 37 in tRNAs. In Dictyoglomus turgidum (strain DSM 6724 / Z-1310), this protein is Probable dual-specificity RNA methyltransferase RlmN.